The chain runs to 358 residues: Cytochrome c peroxidase, mitochondrial (358 aa).

The transit peptide at 1–38 (MAASRTATRTLRALRTSTRPALTAAPRAAFRQGGRRLY) directs the protein to the mitochondrion. The active-site Proton acceptor is the histidine 119. Residues 192 to 214 (PYRPGRQDRDAAGCTPDGRLPDA) are disordered. A heme b-binding site is contributed by histidine 242. The active-site Tryptophan radical intermediate is the tryptophan 258.

This sequence belongs to the peroxidase family. Cytochrome c peroxidase subfamily. In terms of assembly, forms a one-to-one complex with cytochrome c. Heme b is required as a cofactor.

The protein resides in the mitochondrion matrix. The protein localises to the mitochondrion intermembrane space. It carries out the reaction 2 Fe(II)-[cytochrome c] + H2O2 + 2 H(+) = 2 Fe(III)-[cytochrome c] + 2 H2O. In terms of biological role, destroys radicals which are normally produced within the cells and which are toxic to biological systems. The protein is Cytochrome c peroxidase, mitochondrial (ccp-1) of Neurospora crassa (strain ATCC 24698 / 74-OR23-1A / CBS 708.71 / DSM 1257 / FGSC 987).